The following is a 425-amino-acid chain: Phosphoribosylamine--glycine ligase (425 aa).

The ATP-grasp domain maps to 107–312; sequence KDLCARYNIP…LLVLLNAAVD (206 aa). Residue 133-193 participates in ATP binding; sequence VDQTGAPIVI…EEFMTGEEAS (61 aa). The tract at residues 214-233 is disordered; the sequence is RVGDGDVGPNTGGMGAYSPA. Mg(2+) is bound by residues glutamate 282 and asparagine 284.

Belongs to the GARS family. The cofactor is Mg(2+). It depends on Mn(2+) as a cofactor.

The catalysed reaction is 5-phospho-beta-D-ribosylamine + glycine + ATP = N(1)-(5-phospho-beta-D-ribosyl)glycinamide + ADP + phosphate + H(+). It participates in purine metabolism; IMP biosynthesis via de novo pathway; N(1)-(5-phospho-D-ribosyl)glycinamide from 5-phospho-alpha-D-ribose 1-diphosphate: step 2/2. In Mesorhizobium japonicum (strain LMG 29417 / CECT 9101 / MAFF 303099) (Mesorhizobium loti (strain MAFF 303099)), this protein is Phosphoribosylamine--glycine ligase.